The sequence spans 163 residues: Lipoprotein signal peptidase (163 aa).

The next 4 helical transmembrane spans lie at valine 5 to leucine 25, isoleucine 37 to leucine 57, leucine 67 to serine 87, and leucine 91 to tyrosine 111. Catalysis depends on residues aspartate 121 and aspartate 139. Residues tryptophan 132 to tyrosine 152 traverse the membrane as a helical segment.

The protein belongs to the peptidase A8 family.

The protein localises to the cell inner membrane. It carries out the reaction Release of signal peptides from bacterial membrane prolipoproteins. Hydrolyzes -Xaa-Yaa-Zaa-|-(S,diacylglyceryl)Cys-, in which Xaa is hydrophobic (preferably Leu), and Yaa (Ala or Ser) and Zaa (Gly or Ala) have small, neutral side chains.. It functions in the pathway protein modification; lipoprotein biosynthesis (signal peptide cleavage). This protein specifically catalyzes the removal of signal peptides from prolipoproteins. In Sulfurihydrogenibium sp. (strain YO3AOP1), this protein is Lipoprotein signal peptidase.